The following is a 147-amino-acid chain: Cytochrome c oxidase subunit 3 (147 aa).

4 consecutive transmembrane segments (helical) span residues 13-33 (FQIP…VTWA), 48-68 (GLFI…YEYF), 83-103 (FFMA…FLLI), and 125-145 (AWYW…IYWW).

It belongs to the cytochrome c oxidase subunit 3 family. As to quaternary structure, component of the cytochrome c oxidase (complex IV, CIV), a multisubunit enzyme composed of a catalytic core of 3 subunits and several supernumerary subunits. The complex exists as a monomer or a dimer and forms supercomplexes (SCs) in the inner mitochondrial membrane with ubiquinol-cytochrome c oxidoreductase (cytochrome b-c1 complex, complex III, CIII).

The protein localises to the mitochondrion inner membrane. The catalysed reaction is 4 Fe(II)-[cytochrome c] + O2 + 8 H(+)(in) = 4 Fe(III)-[cytochrome c] + 2 H2O + 4 H(+)(out). Its function is as follows. Component of the cytochrome c oxidase, the last enzyme in the mitochondrial electron transport chain which drives oxidative phosphorylation. The respiratory chain contains 3 multisubunit complexes succinate dehydrogenase (complex II, CII), ubiquinol-cytochrome c oxidoreductase (cytochrome b-c1 complex, complex III, CIII) and cytochrome c oxidase (complex IV, CIV), that cooperate to transfer electrons derived from NADH and succinate to molecular oxygen, creating an electrochemical gradient over the inner membrane that drives transmembrane transport and the ATP synthase. Cytochrome c oxidase is the component of the respiratory chain that catalyzes the reduction of oxygen to water. Electrons originating from reduced cytochrome c in the intermembrane space (IMS) are transferred via the dinuclear copper A center (CU(A)) of subunit 2 and heme A of subunit 1 to the active site in subunit 1, a binuclear center (BNC) formed by heme A3 and copper B (CU(B)). The BNC reduces molecular oxygen to 2 water molecules using 4 electrons from cytochrome c in the IMS and 4 protons from the mitochondrial matrix. This Spodoptera frugiperda (Fall armyworm) protein is Cytochrome c oxidase subunit 3 (COIII).